We begin with the raw amino-acid sequence, 396 residues long: Cytochrome b (396 aa).

The next 4 helical transmembrane spans lie at 32-52 (FGSL…TLAM), 76-98 (WLLR…LHIG), 113-133 (LWSI…IGYV), and 179-199 (FFSL…MHLL). Residues histidine 82 and histidine 96 each coordinate heme b. The heme b site is built by histidine 183 and histidine 197. Position 202 (histidine 202) interacts with a ubiquinone. 4 consecutive transmembrane segments (helical) span residues 225–245 (FTSK…IFVF), 289–309 (LGGV…ALIH), 321–341 (LLNL…WVGA), and 348–368 (YILI…ILMI).

This sequence belongs to the cytochrome b family. In terms of assembly, fungal cytochrome b-c1 complex contains 10 subunits; 3 respiratory subunits, 2 core proteins and 5 low-molecular weight proteins. Cytochrome b-c1 complex is a homodimer. It depends on heme b as a cofactor.

The protein localises to the mitochondrion inner membrane. Functionally, component of the ubiquinol-cytochrome c reductase complex (complex III or cytochrome b-c1 complex) that is part of the mitochondrial respiratory chain. The b-c1 complex mediates electron transfer from ubiquinol to cytochrome c. Contributes to the generation of a proton gradient across the mitochondrial membrane that is then used for ATP synthesis. The sequence is that of Cytochrome b (cob) from Spizellomyces punctatus.